The primary structure comprises 901 residues: HTH-type transcriptional regulator MalT (901 aa).

39–46 (SPAGYGKT) lines the ATP pocket. Residues 829–894 (ELIRTSPLTQ…DAVQHAQQLL (66 aa)) form the HTH luxR-type domain. The segment at residues 853-872 (NEQIAGELEVAATTIKTHIR) is a DNA-binding region (H-T-H motif).

This sequence belongs to the MalT family. Monomer in solution. Oligomerizes to an active state in the presence of the positive effectors ATP and maltotriose.

Activated by ATP and maltotriose, which are both required for DNA binding. Its function is as follows. Positively regulates the transcription of the maltose regulon whose gene products are responsible for uptake and catabolism of malto-oligosaccharides. Specifically binds to the promoter region of its target genes, recognizing a short DNA motif called the MalT box. This is HTH-type transcriptional regulator MalT from Escherichia coli (strain ATCC 8739 / DSM 1576 / NBRC 3972 / NCIMB 8545 / WDCM 00012 / Crooks).